We begin with the raw amino-acid sequence, 460 residues long: GTPase Der (460 aa).

EngA-type G domains lie at 2-164 and 199-370; these read KKVI…DDEI and IKVG…ANFT. Residues 8–15, 55–59, 116–119, 205–212, 252–256, and 316–319 contribute to the GTP site; these read GRPNVGKS, DSGGL, NKID, GRVNVGKS, DTAGI, and NKWD. The KH-like domain maps to 371–454; sequence QKIATSKLND…PVILLPRKRG (84 aa).

Belongs to the TRAFAC class TrmE-Era-EngA-EngB-Septin-like GTPase superfamily. EngA (Der) GTPase family. In terms of assembly, associates with the 50S ribosomal subunit.

In terms of biological role, GTPase that plays an essential role in the late steps of ribosome biogenesis. This is GTPase Der from Campylobacter hominis (strain ATCC BAA-381 / DSM 21671 / CCUG 45161 / LMG 19568 / NCTC 13146 / CH001A).